The following is a 96-amino-acid chain: Acylphosphatase (96 aa).

Positions 11-96 constitute an Acylphosphatase-like domain; sequence ARRWYVRGRV…ITSYDSFRIR (86 aa). Active-site residues include arginine 26 and asparagine 44.

It belongs to the acylphosphatase family.

The enzyme catalyses an acyl phosphate + H2O = a carboxylate + phosphate + H(+). The polypeptide is Acylphosphatase (acyP) (Solibacter usitatus (strain Ellin6076)).